The primary structure comprises 530 residues: Lysine--tRNA ligase (530 aa).

The 'HIGH' region motif lies at 28 to 36; it reads PSGHIHVGN. Residues 278 to 282 carry the 'KMSKS' region motif; it reads PMSSS.

This sequence belongs to the class-I aminoacyl-tRNA synthetase family.

The protein resides in the cytoplasm. The enzyme catalyses tRNA(Lys) + L-lysine + ATP = L-lysyl-tRNA(Lys) + AMP + diphosphate. This Methanocaldococcus jannaschii (strain ATCC 43067 / DSM 2661 / JAL-1 / JCM 10045 / NBRC 100440) (Methanococcus jannaschii) protein is Lysine--tRNA ligase (lysS).